Here is a 371-residue protein sequence, read N- to C-terminus: Cuticle collagen 71 (371 aa).

The chain crosses the membrane as a helical span at residues 38-60 (GYAAVTFSTVSVICFCVTMPVVF). Disordered regions lie at residues 108–127 (AGYD…GGDA) and 153–371 (EGPH…GTRR). Residues 174 to 186 (PGPPGPPGPPGRP) show a composition bias toward pro residues. Low complexity predominate over residues 188-201 (PNGKAGANGLNGNP). Pro residues predominate over residues 202–222 (GRPPEAPCEPVTPPPCPPCPA). A compositionally biased stretch (low complexity) spans 223–240 (GPKGAPGQAGYPGADGQP). Residues 223–280 (GPKGAPGQAGYPGADGQPGSQGDNGEKGSDGAAGEKGRPGPLGKIGEPGATGETGENA) enclose the Collagen-like domain. Positions 246–260 (NGEKGSDGAAGEKGR) are enriched in basic and acidic residues. The span at 314 to 323 (AGAPGAPGEN) shows a compositional bias: low complexity. Residues 340–349 (HDGKAGRAGE) show a composition bias toward basic and acidic residues.

The protein belongs to the cuticular collagen family. In terms of assembly, collagen polypeptide chains are complexed within the cuticle by disulfide bonds and other types of covalent cross-links.

The protein resides in the membrane. Its subcellular location is the nucleus. Probable cuticular collagen-like protein. Nematode cuticles are composed largely of collagen-like proteins. The cuticle functions both as an exoskeleton and as a barrier to protect the worm from its environment. Acts downstream of the Wnt signaling pathway, perhaps in the formation of the adult cuticle. This is Cuticle collagen 71 from Caenorhabditis elegans.